The following is a 279-amino-acid chain: ATP synthase gamma chain (279 aa).

Belongs to the ATPase gamma chain family. As to quaternary structure, F-type ATPases have 2 components, CF(1) - the catalytic core - and CF(0) - the membrane proton channel. CF(1) has five subunits: alpha(3), beta(3), gamma(1), delta(1), epsilon(1). CF(0) has three main subunits: a, b and c.

Its subcellular location is the cell membrane. Produces ATP from ADP in the presence of a proton gradient across the membrane. The gamma chain is believed to be important in regulating ATPase activity and the flow of protons through the CF(0) complex. This chain is ATP synthase gamma chain, found in Mycoplasma genitalium (strain ATCC 33530 / DSM 19775 / NCTC 10195 / G37) (Mycoplasmoides genitalium).